A 429-amino-acid chain; its full sequence is Enolase (429 aa).

A (2R)-2-phosphoglycerate-binding site is contributed by Q168. E210 acts as the Proton donor in catalysis. Mg(2+) contacts are provided by D247, E288, and D315. (2R)-2-phosphoglycerate is bound by residues K340, R369, S370, and K391. Catalysis depends on K340, which acts as the Proton acceptor.

It belongs to the enolase family. Mg(2+) serves as cofactor.

The protein localises to the cytoplasm. It is found in the secreted. The protein resides in the cell surface. It catalyses the reaction (2R)-2-phosphoglycerate = phosphoenolpyruvate + H2O. It functions in the pathway carbohydrate degradation; glycolysis; pyruvate from D-glyceraldehyde 3-phosphate: step 4/5. Its function is as follows. Catalyzes the reversible conversion of 2-phosphoglycerate (2-PG) into phosphoenolpyruvate (PEP). It is essential for the degradation of carbohydrates via glycolysis. This chain is Enolase, found in Trichormus variabilis (strain ATCC 29413 / PCC 7937) (Anabaena variabilis).